The chain runs to 335 residues: Glycerol-3-phosphate dehydrogenase [NAD(P)+] (335 aa).

4 residues coordinate NADPH: S15, Y16, R36, and K110. Sn-glycerol 3-phosphate is bound by residues K110, G139, and T141. Residue A143 participates in NADPH binding. K195, D248, S258, R259, and N260 together coordinate sn-glycerol 3-phosphate. K195 (proton acceptor) is an active-site residue. R259 is an NADPH binding site. Positions 283 and 285 each coordinate NADPH.

This sequence belongs to the NAD-dependent glycerol-3-phosphate dehydrogenase family.

It localises to the cytoplasm. The catalysed reaction is sn-glycerol 3-phosphate + NAD(+) = dihydroxyacetone phosphate + NADH + H(+). The enzyme catalyses sn-glycerol 3-phosphate + NADP(+) = dihydroxyacetone phosphate + NADPH + H(+). Its pathway is membrane lipid metabolism; glycerophospholipid metabolism. Its function is as follows. Catalyzes the reduction of the glycolytic intermediate dihydroxyacetone phosphate (DHAP) to sn-glycerol 3-phosphate (G3P), the key precursor for phospholipid synthesis. In Pseudoalteromonas translucida (strain TAC 125), this protein is Glycerol-3-phosphate dehydrogenase [NAD(P)+].